Consider the following 308-residue polypeptide: Pantoate--beta-alanine ligase (308 aa).

Residue Ala2 is a propeptide, removed; partial.

It belongs to the pantothenate synthetase family. Homodimer. As to expression, expressed at low levels in leaf and root.

It localises to the cytoplasm. The catalysed reaction is (R)-pantoate + beta-alanine + ATP = (R)-pantothenate + AMP + diphosphate + H(+). The protein operates within cofactor biosynthesis; (R)-pantothenate biosynthesis; (R)-pantothenate from (R)-pantoate and beta-alanine: step 1/1. The polypeptide is Pantoate--beta-alanine ligase (PANC) (Lotus japonicus (Lotus corniculatus var. japonicus)).